Here is a 794-residue protein sequence, read N- to C-terminus: Phenylalanine--tRNA ligase beta subunit (794 aa).

The region spanning 40 to 158 (NSLNSELVLG…LKKYLGKDVK (119 aa)) is the tRNA-binding domain. In terms of domain architecture, B5 spans 402–477 (KNKTEFEIKI…RLYSYDNIQE (76 aa)). Mg(2+) is bound by residues Asp-455, Asp-461, Glu-464, and Glu-465. The FDX-ACB domain maps to 702-794 (SKFQSSSRDL…NVKKMKVVIR (93 aa)).

It belongs to the phenylalanyl-tRNA synthetase beta subunit family. Type 1 subfamily. As to quaternary structure, tetramer of two alpha and two beta subunits. Mg(2+) serves as cofactor.

Its subcellular location is the cytoplasm. The enzyme catalyses tRNA(Phe) + L-phenylalanine + ATP = L-phenylalanyl-tRNA(Phe) + AMP + diphosphate + H(+). This is Phenylalanine--tRNA ligase beta subunit from Mycoplasma capricolum subsp. capricolum (strain California kid / ATCC 27343 / NCTC 10154).